The sequence spans 835 residues: Bifunctional uridylyltransferase/uridylyl-removing enzyme (835 aa).

The uridylyltransferase stretch occupies residues 1–316; the sequence is MTDEAEDSGP…GGKPVAERSP (316 aa). The segment at 317–650 is uridylyl-removing; sequence LAEGVVEQDG…SADGPEPLGV (334 aa). Positions 431–554 constitute an HD domain; that stretch reads VDRHLIETAV…DALATGPAAW (124 aa). The interval 610–645 is disordered; sequence QTEPPADSAPAPSSPSSPSFPSPLSSPSSPSSADGP. Pro residues predominate over residues 621–630; it reads PSSPSSPSFP. A compositionally biased stretch (low complexity) spans 631–642; that stretch reads SPLSSPSSPSSA. ACT domains lie at 651–736 and 765–835; these read ELLI…LAER and VIEV…SLRT.

Belongs to the GlnD family. Mg(2+) is required as a cofactor.

The enzyme catalyses [protein-PII]-L-tyrosine + UTP = [protein-PII]-uridylyl-L-tyrosine + diphosphate. It carries out the reaction [protein-PII]-uridylyl-L-tyrosine + H2O = [protein-PII]-L-tyrosine + UMP + H(+). Uridylyltransferase (UTase) activity is inhibited by glutamine, while glutamine activates uridylyl-removing (UR) activity. Modifies, by uridylylation and deuridylylation, the PII regulatory proteins (GlnB and homologs), in response to the nitrogen status of the cell that GlnD senses through the glutamine level. Under low glutamine levels, catalyzes the conversion of the PII proteins and UTP to PII-UMP and PPi, while under higher glutamine levels, GlnD hydrolyzes PII-UMP to PII and UMP (deuridylylation). Thus, controls uridylylation state and activity of the PII proteins, and plays an important role in the regulation of nitrogen assimilation and metabolism. The chain is Bifunctional uridylyltransferase/uridylyl-removing enzyme from Streptomyces coelicolor (strain ATCC BAA-471 / A3(2) / M145).